The chain runs to 478 residues: MELEKRIYVGGLSSSIESSDLESRFSRFGSVSNLEIINKSTPVGTIQRFAYLNFRTDEDKWQKCKSYLSNATFKGSKLRIEEARPYYLVKLQQEKKIADLQSTNNDEKNEDHSSKVDLEDPVFHGEIIVPGKHSKNMQVVTDSDVRKDPPRKGWKKGPYGRAIVVLRMYNKNTKKTRFFYPLGKNCLQKLWGRVETNMDNTTAFYDSDHDEYVSYGGKRASRDKIRMQAKLGIKASTQKDDNDFELLNNTTGEIEVTKELNEEQLDALRKKDKDTAASVLAELFGSENTEEIDTVSKTSGVLELDNDSTNNFQKEGLDEQDNLQKEESVHIDVPAEFEAFDERTAVVNVDNLKEMFSSNAQDTSKFSLFGNENGVGEESEMESEIDDRNYETMEEEADGETPLAIVKASSGTKGWPKMFTLPNPSSLFQPGNEDYTSREALESWWSENRLFLTRDYKRKRKDAVKRQRRAHEKRIRLV.

In terms of domain architecture, RRM spans 5-85 (KRIYVGGLSS…SKLRIEEARP (81 aa)). Serine 207 and serine 308 each carry phosphoserine.

It is found in the nucleus. The protein localises to the nucleolus. This is an uncharacterized protein from Schizosaccharomyces pombe (strain 972 / ATCC 24843) (Fission yeast).